Here is a 206-residue protein sequence, read N- to C-terminus: MKLDITTLDGGSAGSLELNEAIFGLEPRADILQRMVRYQLAKRRAGTHAVKNRSDVDRTTKKLYKQKGTGNARHGAASAPQFRGGGRAFGPVVRDHSHDLPKKVRALALKHALSSKAKTSTLIVVDDIKVDSHKTKAMIERFEKLGLSSALIIGGSEVDENFGRAARAIPKIDVLPVQGINVYDILRRDTLVLTRAAVDALEERFK.

This sequence belongs to the universal ribosomal protein uL4 family. As to quaternary structure, part of the 50S ribosomal subunit.

One of the primary rRNA binding proteins, this protein initially binds near the 5'-end of the 23S rRNA. It is important during the early stages of 50S assembly. It makes multiple contacts with different domains of the 23S rRNA in the assembled 50S subunit and ribosome. Functionally, forms part of the polypeptide exit tunnel. The polypeptide is Large ribosomal subunit protein uL4 (Methylorubrum populi (strain ATCC BAA-705 / NCIMB 13946 / BJ001) (Methylobacterium populi)).